Consider the following 732-residue polypeptide: Catalase-peroxidase (732 aa).

The tryptophyl-tyrosyl-methioninium (Trp-Tyr) (with M-246) cross-link spans 97–220 (WHSAGTYRTS…LAAVQMGLIY (124 aa)). Catalysis depends on histidine 98, which acts as the Proton acceptor. The segment at residues 220–246 (YVNPEGPDGNPDPVAAGRDIRETFARM) is a cross-link (tryptophyl-tyrosyl-methioninium (Tyr-Met) (with W-97)). A heme b-binding site is contributed by histidine 261.

The protein belongs to the peroxidase family. Peroxidase/catalase subfamily. Homodimer or homotetramer. The cofactor is heme b. Formation of the three residue Trp-Tyr-Met cross-link is important for the catalase, but not the peroxidase activity of the enzyme.

The catalysed reaction is H2O2 + AH2 = A + 2 H2O. It carries out the reaction 2 H2O2 = O2 + 2 H2O. Bifunctional enzyme with both catalase and broad-spectrum peroxidase activity. This is Catalase-peroxidase from Chlorobium phaeobacteroides (strain DSM 266 / SMG 266 / 2430).